A 132-amino-acid polypeptide reads, in one-letter code: Large-conductance mechanosensitive channel (132 aa).

The next 3 membrane-spanning stretches (helical) occupy residues 14-34, 38-58, and 67-87; these read VVDLAVGVVIGAAFGKIVSSL, IITPLLGMVLGGVDFTSLHFG, and GNFIQTIFDFLIIAASIFMFV.

The protein belongs to the MscL family. As to quaternary structure, homopentamer.

The protein resides in the cell membrane. In terms of biological role, channel that opens in response to stretch forces in the membrane lipid bilayer. May participate in the regulation of osmotic pressure changes within the cell. The protein is Large-conductance mechanosensitive channel of Bacillus cereus (strain ATCC 10987 / NRS 248).